A 248-amino-acid polypeptide reads, in one-letter code: Acetylglutamate kinase (248 aa).

Residues 36–37, Arg58, and Asn147 each bind substrate; that span reads GG.

It belongs to the acetylglutamate kinase family. ArgB subfamily.

It localises to the cytoplasm. It catalyses the reaction N-acetyl-L-glutamate + ATP = N-acetyl-L-glutamyl 5-phosphate + ADP. The protein operates within amino-acid biosynthesis; L-arginine biosynthesis; N(2)-acetyl-L-ornithine from L-glutamate: step 2/4. Functionally, catalyzes the ATP-dependent phosphorylation of N-acetyl-L-glutamate. The polypeptide is Acetylglutamate kinase (Thermus thermophilus (strain ATCC BAA-163 / DSM 7039 / HB27)).